The sequence spans 365 residues: Phosphatidylcholine:ceramide cholinephosphotransferase 2 (365 aa).

Residues 9 to 50 (LEGHLESQTNDSTNTYTSPTEAVEEEGKNGKGKPKTLSNGLR) form a disordered region. Over residues 14 to 28 (ESQTNDSTNTYTSPT) the composition is skewed to polar residues. Transmembrane regions (helical) follow at residues 80 to 100 (GIAF…ITVV), 128 to 148 (FSVS…QWLF), 159 to 179 (FFFI…VTTL), 219 to 239 (ILCG…TYLF), and 248 to 268 (FWWY…CILV). Residue His-229 is part of the active site. Catalysis depends on residues His-272 and Asp-276. A helical transmembrane segment spans residues 273-290 (YTVDVIIAYYITTRLFWW). Over 291–365 (YHSMANEKNL…KIGEDNEKST (75 aa)) the chain is Cytoplasmic. 4 S-palmitoyl cysteine lipidation sites follow: Cys-331, Cys-332, Cys-343, and Cys-348.

It belongs to the sphingomyelin synthase family. Post-translationally, palmitoylated on Cys-331, Cys-332, Cys-343 and Cys-348; which plays an important role in plasma membrane localization. As to expression, highest expression is detected in cortical bone, followed by vertebrae, kidney and liver. Expression levels are very low in spleen, muscle, heart, brown fat and thymus. Expressed in macrophages.

Its subcellular location is the cell membrane. The protein localises to the golgi apparatus membrane. It carries out the reaction an N-acylsphing-4-enine + a 1,2-diacyl-sn-glycero-3-phosphocholine = a sphingomyelin + a 1,2-diacyl-sn-glycerol. It catalyses the reaction an N-acylsphinganine + a 1,2-diacyl-sn-glycero-3-phosphocholine = an N-acylsphinganine-1-phosphocholine + a 1,2-diacyl-sn-glycerol. The catalysed reaction is an N-acyl-(4R)-4-hydroxysphinganine + a 1,2-diacyl-sn-glycero-3-phosphocholine = an N-acyl-(4R)-4-hydroxysphinganine-phosphocholine + a 1,2-diacyl-sn-glycerol. The enzyme catalyses an N-acylsphing-4-enine + a 1,2-diacyl-sn-glycero-3-phosphoethanolamine = an N-acylsphing-4-enine 1-phosphoethanolamine + a 1,2-diacyl-sn-glycerol. It carries out the reaction an N-acylsphinganine + a 1,2-diacyl-sn-glycero-3-phosphoethanolamine = an N-acylsphinganine-1-phosphoethanolamine + a 1,2-diacyl-sn-glycerol. It catalyses the reaction an N-acyl-(4R)-4-hydroxysphinganine + a 1,2-diacyl-sn-glycero-3-phosphoethanolamine = an N-acyl-(4R)-4-hydroxysphinganine-1-phosphoethanolamine + a 1,2-diacyl-sn-glycerol. The catalysed reaction is 1,2-dihexadecanoyl-sn-glycero-3-phosphocholine + an N-acylsphing-4-enine = 1,2-dihexadecanoyl-sn-glycerol + a sphingomyelin. The enzyme catalyses 1-(9Z-octadecenoyl)-2-acyl-sn-3-glycerol + a sphingomyelin = a 1-(9Z-octadecenoyl)-2-acyl-sn-glycero-3-phosphocholine + an N-acylsphing-4-enine. It carries out the reaction N-hexadecanoylsphinganine + a 1,2-diacyl-sn-glycero-3-phosphocholine = N-hexadecanoyl-sphinganine-1-phosphocholine + a 1,2-diacyl-sn-glycerol. It catalyses the reaction N-hexadecanoyl-(4R)-hydroxysphinganine + a 1,2-diacyl-sn-glycero-3-phosphocholine = N-hexadecanoyl-(4R)-hydroxysphinganine-phosphocholine + a 1,2-diacyl-sn-glycerol. The catalysed reaction is N-hexadecanoylsphinganine + a 1,2-diacyl-sn-glycero-3-phosphoethanolamine = N-hexadecanoyl-sphinganine-1-phosphoethanolamine + a 1,2-diacyl-sn-glycerol. The enzyme catalyses N-hexadecanoyl-(4R)-hydroxysphinganine + a 1,2-diacyl-sn-glycero-3-phosphoethanolamine = N-hexadecanoyl-(4R)-hydroxysphinganine-1-phosphoethanolamine + a 1,2-diacyl-sn-glycerol. The protein operates within sphingolipid metabolism. Sphingomyelin synthase that primarily contributes to sphingomyelin synthesis and homeostasis at the plasma membrane. Catalyzes the reversible transfer of phosphocholine moiety in sphingomyelin biosynthesis: in the forward reaction transfers phosphocholine head group of phosphatidylcholine (PC) on to ceramide (CER) to form ceramide phosphocholine (sphingomyelin, SM) and diacylglycerol (DAG) as by-product, and in the reverse reaction transfers phosphocholine from SM to DAG to form PC and CER. The direction of the reaction appears to depend on the levels of CER and DAG in the plasma membrane. Does not use free phosphorylcholine or CDP-choline as donors. Can also transfer phosphoethanolamine head group of phosphatidylethanolamine (PE) on to ceramide (CER) to form ceramide phosphoethanolamine (CPE). Regulates receptor-mediated signal transduction via mitogenic DAG and proapoptotic CER, as well as via SM, a structural component of membrane rafts that serve as platforms for signal transduction and protein sorting. To a lesser extent, plays a role in secretory transport via regulation of DAG pool at the Golgi apparatus and its downstream effects on PRKD1. Required for normal bone matrix mineralization. The sequence is that of Phosphatidylcholine:ceramide cholinephosphotransferase 2 (Sgms2) from Mus musculus (Mouse).